A 133-amino-acid polypeptide reads, in one-letter code: Large ribosomal subunit protein bL19 (133 aa).

The protein belongs to the bacterial ribosomal protein bL19 family.

Functionally, this protein is located at the 30S-50S ribosomal subunit interface and may play a role in the structure and function of the aminoacyl-tRNA binding site. This chain is Large ribosomal subunit protein bL19, found in Stenotrophomonas maltophilia (strain K279a).